A 610-amino-acid polypeptide reads, in one-letter code: UvrABC system protein C (610 aa).

The region spanning 16–94 (SQPGVYRMYD…IQRYQPRYNV (79 aa)) is the GIY-YIG domain. Residues 204 to 239 (SQVIEGLIKRMEEASQALRFEEAARIRDQIHAVRQV) enclose the UVR domain.

Belongs to the UvrC family. In terms of assembly, interacts with UvrB in an incision complex.

It localises to the cytoplasm. Its function is as follows. The UvrABC repair system catalyzes the recognition and processing of DNA lesions. UvrC both incises the 5' and 3' sides of the lesion. The N-terminal half is responsible for the 3' incision and the C-terminal half is responsible for the 5' incision. This Proteus mirabilis (strain HI4320) protein is UvrABC system protein C.